The following is a 326-amino-acid chain: MAVYTDITEDELAGFLAAYDVGTLTSYKGIAEGVENSNFLLHTTRGSYILTLYEKRVNADDLPFFLGLMHHLAERGLSCPLPLPRADGALLGTLSGRPAAVISFLEGMWLRKPEAQHCREVGRALASMHEAGEGFALTRANALSVGGWRPLWRNSEARADEVQDGLKEDIAAELAYLEDHWPRNLPQGVIHADLFPDNVFFLGDRLSGLIDFYFACNDFLAYDIAVCLNSWCFEKNGSYNITKGMALLSGYESVRKLTAEEVSALPLLARGSALRFFLTRLYDWLMTPAGALVVKKDPLEYLTKLRFHRAVVSSAEYGLRRDEASQ.

Belongs to the pseudomonas-type ThrB family.

It carries out the reaction L-homoserine + ATP = O-phospho-L-homoserine + ADP + H(+). It participates in amino-acid biosynthesis; L-threonine biosynthesis; L-threonine from L-aspartate: step 4/5. This is Homoserine kinase from Sinorhizobium fredii (strain NBRC 101917 / NGR234).